We begin with the raw amino-acid sequence, 121 residues long: Copper transport protein CCH (121 aa).

At Ala-2 the chain carries N-acetylalanine. The HMA domain occupies 2–65 (AQTVVLKVGM…TVSKTGKKTS (64 aa)). Cys-13 and Cys-16 together coordinate Cu cation. Residues 70–121 (EAEAEPKAEADPKVETVTETKTEAETKTEAKVDAKADVEPKAAEAETKPSQV) are disordered. Positions 73-121 (AEPKAEADPKVETVTETKTEAETKTEAKVDAKADVEPKAAEAETKPSQV) are enriched in basic and acidic residues.

This sequence belongs to the ATX1 family. The cofactor is Cu cation. As to expression, expressed in phloem (at protein level).

Involved in copper homeostasis. Can complement the yeast mutants atx1 and sod1. The chain is Copper transport protein CCH (CCH) from Arabidopsis thaliana (Mouse-ear cress).